Reading from the N-terminus, the 87-residue chain is HssA/B-like protein 8 (87 aa).

The span at 1–22 (MSILSALTSISNPMKSTKSSVA) shows a compositional bias: polar residues. The disordered stretch occupies residues 1-24 (MSILSALTSISNPMKSTKSSVANG).

The protein belongs to the hssA/B family.

The sequence is that of HssA/B-like protein 8 (hssl8) from Dictyostelium discoideum (Social amoeba).